Consider the following 753-residue polypeptide: 5-methyltetrahydropteroyltriglutamate--homocysteine methyltransferase (753 aa).

Residues 17 to 20 (RELK) and Lys117 contribute to the 5-methyltetrahydropteroyltri-L-glutamate site. L-homocysteine contacts are provided by residues 431–433 (IGS) and Glu484. Residues 431–433 (IGS) and Glu484 contribute to the L-methionine site. 5-methyltetrahydropteroyltri-L-glutamate-binding positions include 515–516 (RC) and Trp561. Residue Asp599 participates in L-homocysteine binding. Asp599 lines the L-methionine pocket. Glu605 contacts 5-methyltetrahydropteroyltri-L-glutamate. The Zn(2+) site is built by His641, Cys643, and Glu665. The active-site Proton donor is His694. Cys726 is a binding site for Zn(2+).

Belongs to the vitamin-B12 independent methionine synthase family. It depends on Zn(2+) as a cofactor.

The enzyme catalyses 5-methyltetrahydropteroyltri-L-glutamate + L-homocysteine = tetrahydropteroyltri-L-glutamate + L-methionine. Its pathway is amino-acid biosynthesis; L-methionine biosynthesis via de novo pathway; L-methionine from L-homocysteine (MetE route): step 1/1. Functionally, catalyzes the transfer of a methyl group from 5-methyltetrahydrofolate to homocysteine resulting in methionine formation. The polypeptide is 5-methyltetrahydropteroyltriglutamate--homocysteine methyltransferase (Escherichia coli O6:K15:H31 (strain 536 / UPEC)).